We begin with the raw amino-acid sequence, 162 residues long: uncharacterized protein (162 aa).

An N-terminal signal peptide occupies residues 1 to 19 (MARVYILFFSVFFVFPLFS). Helical transmembrane passes span 53–75 (LSIGAFPIVTLLSFITYDIIRLI) and 105–127 (IVFGVAVGISVTIGLIDVTYRAV).

The protein resides in the cell membrane. This is an uncharacterized protein from Treponema pallidum (strain Nichols).